A 455-amino-acid polypeptide reads, in one-letter code: Kynurenine 3-monooxygenase (455 aa).

Transmembrane regions (helical) follow at residues 393 to 416 (WLFRLFPTIWVPLYNSVSFTSMPY) and 429 to 453 (LLWRTFLGFIVVGLGVTGSAIYWQR).

It belongs to the aromatic-ring hydroxylase family. KMO subfamily. Requires FAD as cofactor.

The protein resides in the mitochondrion. It localises to the membrane. The enzyme catalyses L-kynurenine + NADPH + O2 + H(+) = 3-hydroxy-L-kynurenine + NADP(+) + H2O. It participates in cofactor biosynthesis; NAD(+) biosynthesis; quinolinate from L-kynurenine: step 1/3. Catalyzes the hydroxylation of L-kynurenine (L-Kyn) to form 3-hydroxy-L-kynurenine (L-3OHKyn). Required for synthesis of quinolinic acid. The polypeptide is Kynurenine 3-monooxygenase (Drosophila willistoni (Fruit fly)).